The following is a 513-amino-acid chain: ATP synthase subunit alpha (513 aa).

169–176 (GDRQTGKT) is an ATP binding site.

The protein belongs to the ATPase alpha/beta chains family. F-type ATPases have 2 components, CF(1) - the catalytic core - and CF(0) - the membrane proton channel. CF(1) has five subunits: alpha(3), beta(3), gamma(1), delta(1), epsilon(1). CF(0) has three main subunits: a(1), b(2) and c(9-12). The alpha and beta chains form an alternating ring which encloses part of the gamma chain. CF(1) is attached to CF(0) by a central stalk formed by the gamma and epsilon chains, while a peripheral stalk is formed by the delta and b chains.

Its subcellular location is the cell inner membrane. It catalyses the reaction ATP + H2O + 4 H(+)(in) = ADP + phosphate + 5 H(+)(out). Functionally, produces ATP from ADP in the presence of a proton gradient across the membrane. The alpha chain is a regulatory subunit. In Bordetella pertussis (strain Tohama I / ATCC BAA-589 / NCTC 13251), this protein is ATP synthase subunit alpha.